The sequence spans 254 residues: Countin-2 (254 aa).

The first 19 residues, Met1–Ala19, serve as a signal peptide directing secretion. Positions Gln22–Gln107 constitute a Saposin B-type domain. 3 disulfides stabilise this stretch: Cys26/Cys103, Cys29/Cys97, and Cys56/Cys68. Asn110 and Asn219 each carry an N-linked (GlcNAc...) asparagine glycan. The interval Gln231–Tyr254 is disordered. The segment covering Thr233 to Ser245 has biased composition (gly residues).

Belongs to the countin family.

It is found in the secreted. Functionally, cell-counting factor that limits the minimum size of the multicellular structure. May up-regulate the expression of both gp24 and gp80, which mediate cell adhesion. This is Countin-2 (ctnB) from Dictyostelium discoideum (Social amoeba).